Consider the following 347-residue polypeptide: L-threonine 3-dehydrogenase (347 aa).

Residue Cys-42 coordinates Zn(2+). Active-site charge relay system residues include Thr-44 and His-47. Positions 67, 68, 97, 100, 103, and 111 each coordinate Zn(2+). NAD(+) contacts are provided by residues Ile-180, Asp-200, Arg-205, 267–269 (LSL), and 292–293 (IT).

Belongs to the zinc-containing alcohol dehydrogenase family. As to quaternary structure, homotetramer. Zn(2+) serves as cofactor.

The protein localises to the cytoplasm. The enzyme catalyses L-threonine + NAD(+) = (2S)-2-amino-3-oxobutanoate + NADH + H(+). The protein operates within amino-acid degradation; L-threonine degradation via oxydo-reductase pathway; glycine from L-threonine: step 1/2. Functionally, catalyzes the NAD(+)-dependent oxidation of L-threonine to 2-amino-3-ketobutyrate. The protein is L-threonine 3-dehydrogenase of Bacillus velezensis (strain DSM 23117 / BGSC 10A6 / LMG 26770 / FZB42) (Bacillus amyloliquefaciens subsp. plantarum).